The sequence spans 220 residues: StAR-related lipid transfer protein 6 (220 aa).

Residues 1-208 (MDFKAIAQQT…AKDGIKAHRT (208 aa)) enclose the START domain.

Functionally, may be involved in the intracellular transport of sterols or other lipids. May bind cholesterol or other sterols. This Homo sapiens (Human) protein is StAR-related lipid transfer protein 6 (STARD6).